A 358-amino-acid polypeptide reads, in one-letter code: Cytoplasmic tRNA 2-thiolation protein 1 (358 aa).

Belongs to the TtcA family. CTU1/NCS6/ATPBD3 subfamily.

The protein resides in the cytoplasm. Its pathway is tRNA modification; 5-methoxycarbonylmethyl-2-thiouridine-tRNA biosynthesis. Its function is as follows. Plays a central role in 2-thiolation of mcm(5)S(2)U at tRNA wobble positions of tRNA(Lys), tRNA(Glu) and tRNA(Gln). Directly binds tRNAs and probably acts by catalyzing adenylation of tRNAs, an intermediate required for 2-thiolation. It is unclear whether it acts as a sulfurtransferase that transfers sulfur from thiocarboxylated URM1 onto the uridine of tRNAs at wobble position. Prior mcm(5) tRNA modification by the elongator complex is required for 2-thiolation. May also be involved in protein urmylation. This chain is Cytoplasmic tRNA 2-thiolation protein 1, found in Candida glabrata (strain ATCC 2001 / BCRC 20586 / JCM 3761 / NBRC 0622 / NRRL Y-65 / CBS 138) (Yeast).